We begin with the raw amino-acid sequence, 655 residues long: tRNA 5-methylaminomethyl-2-thiouridine biosynthesis bifunctional protein MnmC (655 aa).

The tRNA (mnm(5)s(2)U34)-methyltransferase stretch occupies residues 1-236; that stretch reads MTDPLVPAVL…KRAMLVGRFA (236 aa). The segment at 260-655 is FAD-dependent cmnm(5)s(2)U34 oxidoreductase; sequence IGTGLAGCAA…LRALRQGTAS (396 aa).

In the N-terminal section; belongs to the methyltransferase superfamily. tRNA (mnm(5)s(2)U34)-methyltransferase family. It in the C-terminal section; belongs to the DAO family. Requires FAD as cofactor.

It localises to the cytoplasm. The enzyme catalyses 5-aminomethyl-2-thiouridine(34) in tRNA + S-adenosyl-L-methionine = 5-methylaminomethyl-2-thiouridine(34) in tRNA + S-adenosyl-L-homocysteine + H(+). Its function is as follows. Catalyzes the last two steps in the biosynthesis of 5-methylaminomethyl-2-thiouridine (mnm(5)s(2)U) at the wobble position (U34) in tRNA. Catalyzes the FAD-dependent demodification of cmnm(5)s(2)U34 to nm(5)s(2)U34, followed by the transfer of a methyl group from S-adenosyl-L-methionine to nm(5)s(2)U34, to form mnm(5)s(2)U34. The sequence is that of tRNA 5-methylaminomethyl-2-thiouridine biosynthesis bifunctional protein MnmC from Paraburkholderia phymatum (strain DSM 17167 / CIP 108236 / LMG 21445 / STM815) (Burkholderia phymatum).